We begin with the raw amino-acid sequence, 456 residues long: Cytochrome P450 monooxygenase avaH (456 aa).

A helical transmembrane segment spans residues 243–263; that stretch reads LMSYFVSVFLVNVALFNAVSI. Residue cysteine 403 coordinates heme.

Belongs to the cytochrome P450 family. Heme is required as a cofactor.

It is found in the membrane. The protein operates within secondary metabolite biosynthesis. Its function is as follows. Cytochrome P450 monooxygenase; part of the cluster that mediates the biosynthesis of a highly modified cyclo-arginine-tryptophan dipeptide (cRW). The first step of the pathway is perfornmed by the arginine-containing cyclodipeptide synthase (RCPDS) avaA that acts as the scaffold-generating enzyme and is responsible for formation of the cyclo-Arg-Trp (cRW) diketopiperazine. AvaB then acts as a multifunctional flavoenzyme that is responsible for generating the cyclo-Arg-formylkynurenine DKP, which can be deformylated by avaC. AvaB then further catalyzes an additional N-oxidation followed by cyclization and dehydration. The next step is an N-acetylation of the guanidine group catalyzed by the arginine N-acetyltransferase avaD. The roles of the additional enzymes identified within the ava cluster still have to be determined. The chain is Cytochrome P450 monooxygenase avaH from Aspergillus versicolor.